We begin with the raw amino-acid sequence, 541 residues long: Arginine--tRNA ligase (541 aa).

Positions 119–129 (ANPTGPLHIGH) match the 'HIGH' region motif.

Belongs to the class-I aminoacyl-tRNA synthetase family. In terms of assembly, monomer.

The protein localises to the cytoplasm. It carries out the reaction tRNA(Arg) + L-arginine + ATP = L-arginyl-tRNA(Arg) + AMP + diphosphate. This Helicobacter acinonychis (strain Sheeba) protein is Arginine--tRNA ligase.